A 709-amino-acid chain; its full sequence is Polyribonucleotide nucleotidyltransferase (709 aa).

The Mg(2+) site is built by D486 and D492. In terms of domain architecture, KH spans 553–612; sequence PRIHTIKINADKIKDVIGKGGSVIRALTEETGTTIEIEDDGTVKIAATSGEQAKQAIARI. In terms of domain architecture, S1 motif spans 622–690; the sequence is GRIYNGKVTR…RQGRIRLSMK (69 aa). Residues 690–709 form a disordered region; sequence KEAQATQQEAAETSSEDPAN. A compositionally biased stretch (low complexity) spans 691–702; the sequence is EAQATQQEAAET.

It belongs to the polyribonucleotide nucleotidyltransferase family. Component of the RNA degradosome, which is a multiprotein complex involved in RNA processing and mRNA degradation. The cofactor is Mg(2+).

It localises to the cytoplasm. The enzyme catalyses RNA(n+1) + phosphate = RNA(n) + a ribonucleoside 5'-diphosphate. Involved in mRNA degradation. Catalyzes the phosphorolysis of single-stranded polyribonucleotides processively in the 3'- to 5'-direction. The sequence is that of Polyribonucleotide nucleotidyltransferase from Proteus mirabilis (strain HI4320).